The chain runs to 278 residues: Betaine--homocysteine S-methyltransferase 1 (278 aa).

A Hcy-binding domain is found at 11–278 (KGILERLNSG…FGLEPRVATR (268 aa)). 3 positions are modified to N6-succinyllysine: Lys-40, Lys-93, and Lys-98. Cys-217 is a Zn(2+) binding site. N6-succinyllysine occurs at positions 232 and 241.

In terms of assembly, homotetramer. Requires Zn(2+) as cofactor. Found exclusively in liver and kidney.

It is found in the cytoplasm. It localises to the cytosol. The protein localises to the nucleus. The catalysed reaction is L-homocysteine + glycine betaine = N,N-dimethylglycine + L-methionine. Its pathway is amine and polyamine degradation; betaine degradation; sarcosine from betaine: step 1/2. It participates in amino-acid biosynthesis; L-methionine biosynthesis via de novo pathway; L-methionine from L-homocysteine (BhmT route): step 1/1. With respect to regulation, inhibited by dimethylglycine and methylthioacetate. Functionally, involved in the regulation of homocysteine metabolism. Converts betaine and homocysteine to dimethylglycine and methionine, respectively. This reaction is also required for the irreversible oxidation of choline. The protein is Betaine--homocysteine S-methyltransferase 1 of Sus scrofa (Pig).